The following is a 258-amino-acid chain: uncharacterized protein (258 aa).

6 helical membrane passes run 24 to 44 (IPLF…VNIF), 70 to 90 (PLVH…FLLM), 100 to 120 (LCTI…AYLI), 130 to 150 (VYVG…LNLF), 157 to 177 (LLNL…VLGL), and 181 to 201 (FSIT…FSFA). His-188 is a catalytic residue.

The protein belongs to the peptidase S54 family.

The protein resides in the golgi apparatus membrane. This is an uncharacterized protein from Schizosaccharomyces pombe (strain 972 / ATCC 24843) (Fission yeast).